The following is a 274-amino-acid chain: Oxidoreductase stcQ (274 aa).

It belongs to the avfA family.

It participates in mycotoxin biosynthesis; sterigmatocystin biosynthesis. Functionally, oxidoreductase; part of the gene cluster that mediates the biosynthesis of sterigmatocystin (ST), a polyketide-derived furanocoumarin which is part of the most toxic and carcinogenic compounds among the known mycotoxins. The first step in the biosynthesis of sterigmatocystin is the production of hexanoate by the fatty acid synthase (FAS) units stcJ and stcK. The polyketide backbone is assembled by the non-reducing polyketide synthase stcA by condensation of the starter hexanoyl-CoA and 7 malonyl-CoA extender units followed by cyclization and release of norsolorinic acid. Norsolorinic acid is the first stable intermediate in the biosynthesis of sterigmatocystin and is converted into averantin (AVN) by the ketoreductase stcE which reduces the hexanoate ketone to an alcohol. Averantin is then oxidized into 5'-hydroxyaverantin (HAVN) by the cytochrome P450 monooxygenase stcF. 5'-hydroxyaverantin is further converted to 5'-oxyaverantin (OAVN) by the 5'-hydroxyaverantin dehydrogenase stcG. The next step is the conversion of OAVN into averufin (AVF) which is catalyzed by a yet to be identified enzyme. The cytochrome P450 monooxygenase stcB and the flavin-binding monooxygenase stcW are both required for the conversion of averufin to 1-hydroxyversicolorone. The esterase stcI probably catalyzes the formation of versiconal hemiacetal acetate from 1-hydroxyversicolorone. The oxydoreductase stcN then probably catalyzes the biosynthetic step from versiconal to versicolorin B (VERB). The next step is performed by the versicolorin B desaturase stcL to produce versicolorin A (VERA). The ketoreductase stcU and the cytochrome P450 monooxygenase stcS are involved in the conversion of versicolorin A to demethylsterigmatocystin. The Baeyer-Villiger oxidas stcQ and the reductase stcR might be involved in the biosynthetic step from versicolorin A to demethylsterigmatocystin. The final step in the biosynthesis of sterigmatocystin is the methylation of demethylsterigmatocystin catalyzed by the methyltransferase stcP. This Emericella nidulans (strain FGSC A4 / ATCC 38163 / CBS 112.46 / NRRL 194 / M139) (Aspergillus nidulans) protein is Oxidoreductase stcQ.